The sequence spans 119 residues: Large ribosomal subunit protein bL20 (119 aa).

The protein belongs to the bacterial ribosomal protein bL20 family.

In terms of biological role, binds directly to 23S ribosomal RNA and is necessary for the in vitro assembly process of the 50S ribosomal subunit. It is not involved in the protein synthesizing functions of that subunit. This Clostridium tetani (strain Massachusetts / E88) protein is Large ribosomal subunit protein bL20.